Here is a 265-residue protein sequence, read N- to C-terminus: Imidazole glycerol phosphate synthase subunit HisF (265 aa).

Catalysis depends on residues D11 and D130.

Belongs to the HisA/HisF family. In terms of assembly, heterodimer of HisH and HisF.

It localises to the cytoplasm. The catalysed reaction is 5-[(5-phospho-1-deoxy-D-ribulos-1-ylimino)methylamino]-1-(5-phospho-beta-D-ribosyl)imidazole-4-carboxamide + L-glutamine = D-erythro-1-(imidazol-4-yl)glycerol 3-phosphate + 5-amino-1-(5-phospho-beta-D-ribosyl)imidazole-4-carboxamide + L-glutamate + H(+). It functions in the pathway amino-acid biosynthesis; L-histidine biosynthesis; L-histidine from 5-phospho-alpha-D-ribose 1-diphosphate: step 5/9. In terms of biological role, IGPS catalyzes the conversion of PRFAR and glutamine to IGP, AICAR and glutamate. The HisF subunit catalyzes the cyclization activity that produces IGP and AICAR from PRFAR using the ammonia provided by the HisH subunit. The protein is Imidazole glycerol phosphate synthase subunit HisF of Idiomarina loihiensis (strain ATCC BAA-735 / DSM 15497 / L2-TR).